A 182-amino-acid polypeptide reads, in one-letter code: CASP-like protein 5B1 (182 aa).

A disordered region spans residues 1 to 20; the sequence is GDASHAVDHPIGGHPEHEHD. At 1–41 the chain is on the cytoplasmic side; it reads GDASHAVDHPIGGHPEHEHDLREEEGPLIFPMKDLPGTPGT. The chain crosses the membrane as a helical span at residues 42–62; sequence VGGLALRMGQFIFAAASVVIM. Residues 63 to 73 lie on the Extracellular side of the membrane; sequence VTSDEFINFTA. N70 carries N-linked (GlcNAc...) asparagine glycosylation. The chain crosses the membrane as a helical span at residues 74 to 94; that stretch reads FCYLAAAMALQFLWSFVLATI. At 95-108 the chain is on the cytoplasmic side; it reads DVYALLIKRGLPNS. Residues 109 to 129 form a helical membrane-spanning segment; it reads ILLSLFVVGDWVTATLSLAAA. Topologically, residues 130–159 are extracellular; sequence CSTAGITVLFDKDLNYCDQMHCRRYQLSAT. A helical transmembrane segment spans residues 160 to 180; sequence MAFFSWVLIAISSLITLLLLV. The Cytoplasmic portion of the chain corresponds to 181-182; it reads SE.

It belongs to the Casparian strip membrane proteins (CASP) family. Homodimer and heterodimers.

Its subcellular location is the cell membrane. This chain is CASP-like protein 5B1, found in Picea sitchensis (Sitka spruce).